Reading from the N-terminus, the 329-residue chain is Acetyl-coenzyme A carboxylase carboxyl transferase subunit alpha (329 aa).

The CoA carboxyltransferase C-terminal domain maps to 40 to 294; sequence QLESLASRRR…RAALERHLGE (255 aa).

The protein belongs to the AccA family. In terms of assembly, acetyl-CoA carboxylase is a heterohexamer composed of biotin carboxyl carrier protein (AccB), biotin carboxylase (AccC) and two subunits each of ACCase subunit alpha (AccA) and ACCase subunit beta (AccD).

The protein resides in the cytoplasm. The catalysed reaction is N(6)-carboxybiotinyl-L-lysyl-[protein] + acetyl-CoA = N(6)-biotinyl-L-lysyl-[protein] + malonyl-CoA. It functions in the pathway lipid metabolism; malonyl-CoA biosynthesis; malonyl-CoA from acetyl-CoA: step 1/1. Functionally, component of the acetyl coenzyme A carboxylase (ACC) complex. First, biotin carboxylase catalyzes the carboxylation of biotin on its carrier protein (BCCP) and then the CO(2) group is transferred by the carboxyltransferase to acetyl-CoA to form malonyl-CoA. This chain is Acetyl-coenzyme A carboxylase carboxyl transferase subunit alpha, found in Synechococcus sp. (strain CC9902).